A 258-amino-acid polypeptide reads, in one-letter code: Acyl-[acyl-carrier-protein]--UDP-N-acetylglucosamine O-acyltransferase (258 aa).

The protein belongs to the transferase hexapeptide repeat family. LpxA subfamily. As to quaternary structure, homotrimer.

It localises to the cytoplasm. The enzyme catalyses a (3R)-hydroxyacyl-[ACP] + UDP-N-acetyl-alpha-D-glucosamine = a UDP-3-O-[(3R)-3-hydroxyacyl]-N-acetyl-alpha-D-glucosamine + holo-[ACP]. The protein operates within glycolipid biosynthesis; lipid IV(A) biosynthesis; lipid IV(A) from (3R)-3-hydroxytetradecanoyl-[acyl-carrier-protein] and UDP-N-acetyl-alpha-D-glucosamine: step 1/6. Functionally, involved in the biosynthesis of lipid A, a phosphorylated glycolipid that anchors the lipopolysaccharide to the outer membrane of the cell. In Pseudomonas fluorescens (strain Pf0-1), this protein is Acyl-[acyl-carrier-protein]--UDP-N-acetylglucosamine O-acyltransferase.